The sequence spans 742 residues: Protein CdcH (742 aa).

ATP contacts are provided by residues 230-237 and 503-510; these read GPPGTGKT. Residues 722–742 are disordered; the sequence is FKGSQGPNVNSRQGSEHIGFQ. A compositionally biased stretch (polar residues) spans 723–734; it reads KGSQGPNVNSRQ.

Belongs to the AAA ATPase family. CDC48 subfamily.

Functionally, may be part of a transduction pathway connecting light to cell division. This Halobacterium salinarum (strain ATCC 700922 / JCM 11081 / NRC-1) (Halobacterium halobium) protein is Protein CdcH (cdcH).